Consider the following 130-residue polypeptide: Small ribosomal subunit protein uS8 (130 aa).

It belongs to the universal ribosomal protein uS8 family. Part of the 30S ribosomal subunit.

Functionally, one of the primary rRNA binding proteins, it binds directly to 16S rRNA central domain where it helps coordinate assembly of the platform of the 30S subunit. The chain is Small ribosomal subunit protein uS8 from Caldivirga maquilingensis (strain ATCC 700844 / DSM 13496 / JCM 10307 / IC-167).